The chain runs to 309 residues: MAPKFPDCVEELRAAGNESFRNGQYAEASALYGRALRVLQAQGSSDPEEESVLYSNRAACHLKDGNCRDCIKDCTSALALVPFSIKPLLRRASAYEALEKYPMAYVDYKTVLQIDDSVTSALEGINRMTRALMDSLGPEWRLKLPSIPLVPVSAQKRWNSLPSENHKEMAKSKSKETTATKNRVPSAGDVEKAKVLKEEGNELVKKGNHKKAIEKYSESLLCSNLESATYSNRALCYLVLKQYTEAVKDCTEALKLDGKNVKAFYRRAQAHKALKDYKSSFADISNLLQIEPRNGPAQKLRQEVKQNLH.

TPR repeat units follow at residues 9–42 (VEEL…LQAQ), 51–84 (SVLY…VPFS), and 86–118 (KPLL…DDSV). A Phosphoserine modification is found at Ser160. Positions 161 to 189 (LPSENHKEMAKSKSKETTATKNRVPSAGD) are disordered. Over residues 164-178 (ENHKEMAKSKSKETT) the composition is skewed to basic and acidic residues. Phosphoserine is present on Ser186. TPR repeat units lie at residues 193–226 (AKVL…SNLE), 227–260 (SATY…DGKN), and 262–294 (KAFY…EPRN). Residue Lys197 forms a Glycyl lysine isopeptide (Lys-Gly) (interchain with G-Cter in SUMO2) linkage.

This sequence belongs to the Tom34 family. Interacts with HSP90A, VCP, ATP6V1D, KIAA0665, AMPK, and DMAP1 through its TPR repeat.

The protein resides in the cytoplasm. Its subcellular location is the mitochondrion outer membrane. Its function is as follows. Plays a role in the import of cytosolically synthesized preproteins into mitochondria. Binds the mature portion of precursor proteins. Interacts with cellular components, and possesses weak ATPase activity. May be a chaperone-like protein that helps to keep newly synthesized precursors in an unfolded import compatible state. The sequence is that of Mitochondrial import receptor subunit TOM34 (TOMM34) from Pongo abelii (Sumatran orangutan).